Consider the following 550-residue polypeptide: Hydroxylamine reductase (550 aa).

[2Fe-2S] cluster is bound by residues cysteine 3, cysteine 6, cysteine 18, and cysteine 25. Residues histidine 249, glutamate 273, cysteine 317, cysteine 405, cysteine 433, cysteine 458, glutamate 492, and lysine 494 each contribute to the hybrid [4Fe-2O-2S] cluster site. Cysteine 405 carries the post-translational modification Cysteine persulfide.

This sequence belongs to the HCP family. It depends on [2Fe-2S] cluster as a cofactor. Hybrid [4Fe-2O-2S] cluster serves as cofactor.

It localises to the cytoplasm. The enzyme catalyses A + NH4(+) + H2O = hydroxylamine + AH2 + H(+). In terms of biological role, catalyzes the reduction of hydroxylamine to form NH(3) and H(2)O. In Escherichia coli O17:K52:H18 (strain UMN026 / ExPEC), this protein is Hydroxylamine reductase.